A 530-amino-acid chain; its full sequence is Autoinducer-2 kinase (530 aa).

Belongs to the FGGY kinase family.

It localises to the cytoplasm. It catalyses the reaction (S)-4,5-dihydroxypentane-2,3-dione + ATP = (2S)-2-hydroxy-3,4-dioxopentyl phosphate + ADP + H(+). In terms of biological role, catalyzes the phosphorylation of autoinducer-2 (AI-2) to phospho-AI-2, which subsequently inactivates the transcriptional regulator LsrR and leads to the transcription of the lsr operon. Phosphorylates the ring-open form of (S)-4,5-dihydroxypentane-2,3-dione (DPD), which is the precursor to all AI-2 signaling molecules, at the C5 position. The polypeptide is Autoinducer-2 kinase (Yersinia pseudotuberculosis serotype O:3 (strain YPIII)).